Here is a 123-residue protein sequence, read N- to C-terminus: Small ribosomal subunit protein uS12cz/uS12cy (123 aa).

Belongs to the universal ribosomal protein uS12 family. In terms of assembly, part of the 30S ribosomal subunit.

The protein resides in the plastid. It localises to the chloroplast. With S4 and S5 plays an important role in translational accuracy. Located at the interface of the 30S and 50S subunits. This chain is Small ribosomal subunit protein uS12cz/uS12cy (rps12-A), found in Atropa belladonna (Belladonna).